A 375-amino-acid polypeptide reads, in one-letter code: Queuine tRNA-ribosyltransferase (375 aa).

D89 (proton acceptor) is an active-site residue. Residues 89–93, D143, Q187, and G214 each bind substrate; that span reads DSGGF. Residues 245–251 form an RNA binding region; sequence GVGKPED. D264 serves as the catalytic Nucleophile. The segment at 269-273 is RNA binding; important for wobble base 34 recognition; sequence TRNAR. The Zn(2+) site is built by C302, C304, C307, and H333.

This sequence belongs to the queuine tRNA-ribosyltransferase family. In terms of assembly, homodimer. Within each dimer, one monomer is responsible for RNA recognition and catalysis, while the other monomer binds to the replacement base PreQ1. Requires Zn(2+) as cofactor.

It catalyses the reaction 7-aminomethyl-7-carbaguanine + guanosine(34) in tRNA = 7-aminomethyl-7-carbaguanosine(34) in tRNA + guanine. It functions in the pathway tRNA modification; tRNA-queuosine biosynthesis. Functionally, catalyzes the base-exchange of a guanine (G) residue with the queuine precursor 7-aminomethyl-7-deazaguanine (PreQ1) at position 34 (anticodon wobble position) in tRNAs with GU(N) anticodons (tRNA-Asp, -Asn, -His and -Tyr). Catalysis occurs through a double-displacement mechanism. The nucleophile active site attacks the C1' of nucleotide 34 to detach the guanine base from the RNA, forming a covalent enzyme-RNA intermediate. The proton acceptor active site deprotonates the incoming PreQ1, allowing a nucleophilic attack on the C1' of the ribose to form the product. After dissociation, two additional enzymatic reactions on the tRNA convert PreQ1 to queuine (Q), resulting in the hypermodified nucleoside queuosine (7-(((4,5-cis-dihydroxy-2-cyclopenten-1-yl)amino)methyl)-7-deazaguanosine). This is Queuine tRNA-ribosyltransferase from Salmonella typhi.